The primary structure comprises 249 residues: Ubiquinone biosynthesis O-methyltransferase (249 aa).

The S-adenosyl-L-methionine site is built by R44, G75, D96, and M138.

Belongs to the methyltransferase superfamily. UbiG/COQ3 family.

It carries out the reaction a 3-demethylubiquinol + S-adenosyl-L-methionine = a ubiquinol + S-adenosyl-L-homocysteine + H(+). It catalyses the reaction a 3-(all-trans-polyprenyl)benzene-1,2-diol + S-adenosyl-L-methionine = a 2-methoxy-6-(all-trans-polyprenyl)phenol + S-adenosyl-L-homocysteine + H(+). Its pathway is cofactor biosynthesis; ubiquinone biosynthesis. Its function is as follows. O-methyltransferase that catalyzes the 2 O-methylation steps in the ubiquinone biosynthetic pathway. This Paramagnetospirillum magneticum (strain ATCC 700264 / AMB-1) (Magnetospirillum magneticum) protein is Ubiquinone biosynthesis O-methyltransferase.